Reading from the N-terminus, the 293-residue chain is Cell adhesion molecule CEACAM21 (293 aa).

The first 34 residues, 1–34, serve as a signal peptide directing secretion; the sequence is MGPPSACPHRECIPWQGLLLTASLLTFWNAPTTA. The Extracellular portion of the chain corresponds to 35 to 240; that stretch reads WLFIASAPFE…TVKSDDNTLG (206 aa). Residue asparagine 111 is glycosylated (N-linked (GlcNAc...) asparagine). The 85-residue stretch at 147–231 folds into the Ig-like C2-type domain; it reads PSIQASSTTV…SNRSDPLKLT (85 aa). Cysteine 166 and cysteine 214 are joined by a disulfide. Residues 241–261 traverse the membrane as a helical segment; the sequence is ILIGVLVGSLLVAALVCFLLL. Topologically, residues 262–293 are cytoplasmic; sequence RKTGRASDQSDFREQQPPASTPGHGPSDSSIS. The interval 267-293 is disordered; it reads ASDQSDFREQQPPASTPGHGPSDSSIS.

This sequence belongs to the immunoglobulin superfamily. CEA family.

It localises to the membrane. The protein is Cell adhesion molecule CEACAM21 of Homo sapiens (Human).